The following is a 340-amino-acid chain: Glutaminyl-peptide cyclotransferase (340 aa).

The N-terminal stretch at 1 to 23 (MAIGSVVFAAAGLLLLLLPPSHQ) is a signal peptide. Asn-42 carries an N-linked (GlcNAc...) asparagine glycan. Alpha-D-mannopyranose is bound by residues Arg-85 and Glu-91. Cys-113 and Cys-136 are joined by a disulfide. A Zn(2+)-binding site is contributed by Asp-131. Alpha-D-mannopyranose is bound by residues Gln-151 and Arg-155. A glycan (N-linked (GlcNAc...) asparagine) is linked at Asn-156. The active-site Proton acceptor is the Glu-170. Position 171 (Glu-171) interacts with Zn(2+). Asp-218 functions as the Proton acceptor in the catalytic mechanism. His-297 contacts Zn(2+). Residue Leu-306 participates in alpha-D-mannopyranose binding.

It belongs to the glutaminyl-peptide cyclotransferase family.

Its subcellular location is the secreted. The catalysed reaction is N-terminal L-glutaminyl-[peptide] = N-terminal 5-oxo-L-prolyl-[peptide] + NH4(+). Inhibited by imidazoles (imidazole, benzimidazole, 1-benzylimidazole, 1-methylimidazole, P150/03, N-omega-acetylhistamine and 4-methylimidazole) and cysteamines (cysteamine, N-dimethylcysteamine and N-diethylcysteamine). Partially inhibited by PDB50 1(3,4-dimethoxyphenyl)-3-(3-imidazol-1-ylpropyl)thiourea. Its function is as follows. Acts as a glutaminyl-peptide cyclotransferase. Responsible for the biosynthesis of pyroglutamyl peptides. Might be more efficient in the conversion of tri and tetrapeptides in vitro. Might have a relative preference for substrates containing hydrophobic amino acids in vitro. The polypeptide is Glutaminyl-peptide cyclotransferase (Drosophila melanogaster (Fruit fly)).